The primary structure comprises 120 residues: Flagellar protein FliT (120 aa).

Residues 1–50 (MENLSPLLIEYQGLLKLIRNIKAMALNGLWDDVVEQEIVYIQSIERISQI) form a required for homodimerization region. The tract at residues 60–98 (VQLQFRQLLQDILDTESQVKELLQNRMQELAVLIQQSQN) is fliD binding.

The protein belongs to the FliT family. As to quaternary structure, homodimer. Interacts with FliD and FlhC.

It is found in the cytoplasm. It localises to the cytosol. In terms of biological role, dual-function protein that regulates the transcription of class 2 flagellar operons and that also acts as an export chaperone for the filament-capping protein FliD. As a transcriptional regulator, acts as an anti-FlhDC factor; it directly binds FlhC, thus inhibiting the binding of the FlhC/FlhD complex to class 2 promoters, resulting in decreased expression of class 2 flagellar operons. As a chaperone, effects FliD transition to the membrane by preventing its premature polymerization, and by directing it to the export apparatus. The sequence is that of Flagellar protein FliT from Dickeya chrysanthemi (Pectobacterium chrysanthemi).